Consider the following 570-residue polypeptide: MSTRISRSVYADMFGPTTGDRVRLADTDLIIEVEKDLTTYGEEVKFGGGKVIRDGMGQSQVTNKDGAADTVITNALIVDHWGIVKADVAITAGVITAIGKAGNPDVQPNVDIIIGPGTDVIAGEGKILTAGGFDSHIHFICPQQIEHALMSGVTTMLGGGTGPSHGTFATTCTPGPWHIGRMIQSFDAFPVNLGISGKGNAALPGPLKEMIEGGACALKLHEDWGTTPAAIDNCLSVADDYDIQVMIHTDTLNESGFVEDTVKAFKGRTIHAFHTEGAGGGHAPDIIKVASLENVLPSSTNPTRPFTKNTIDEHLDMLMVCHHLDPSIAEDLAFAESRIRKETIAAEDILHDLGALSMMSSDSQAMGRLGEVIIRTWQTADKMKKQRGALPQDSARNDNFRVKRYIAKYTINPAIAHGVSKLIGSVETGKMADLVLWSPAFFGVKPDCIIKGGSIVAAPMGDPNASIPTPQPVHYQPMFGAYGKALTVSSVVFTSQAAAAGNLARDLGIAKTLVPVSNVRGGISKKSMIHNDATPKLEVDPETYEVRADGELLTCAPAEVLPLAQRYFMF.

The 440-residue stretch at 131 to 570 (GGFDSHIHFI…LPLAQRYFMF (440 aa)) folds into the Urease domain. Residues His136, His138, and Lys219 each contribute to the Ni(2+) site. At Lys219 the chain carries N6-carboxylysine. A substrate-binding site is contributed by His221. 2 residues coordinate Ni(2+): His248 and His274. His322 functions as the Proton donor in the catalytic mechanism. Asp362 is a Ni(2+) binding site.

The protein belongs to the metallo-dependent hydrolases superfamily. Urease alpha subunit family. Heterotrimer of UreA (gamma), UreB (beta) and UreC (alpha) subunits. Three heterotrimers associate to form the active enzyme. The cofactor is Ni cation. In terms of processing, carboxylation allows a single lysine to coordinate two nickel ions.

It is found in the cytoplasm. It catalyses the reaction urea + 2 H2O + H(+) = hydrogencarbonate + 2 NH4(+). It participates in nitrogen metabolism; urea degradation; CO(2) and NH(3) from urea (urease route): step 1/1. The protein is Urease subunit alpha of Rhodopseudomonas palustris (strain TIE-1).